The following is a 100-amino-acid chain: MSKKSLIARQRKRIILVLIHSHNRYVYRTNGKDEKSFEKKLRIYSFLQKLPRNSLRCRLRNRCYVTGRSRGYFRTFGLSRHILRDMAHYGLLPGVTKASW.

It belongs to the universal ribosomal protein uS14 family. In terms of assembly, part of the 30S ribosomal subunit.

It is found in the plastid. The protein localises to the chloroplast. Binds 16S rRNA, required for the assembly of 30S particles. The polypeptide is Small ribosomal subunit protein uS14c (Euglena gracilis).